Here is a 380-residue protein sequence, read N- to C-terminus: Chaperone protein DnaJ (380 aa).

The 68-residue stretch at 5-72 folds into the J domain; the sequence is DYYDTLGVPK…QKRAAYDQYG (68 aa). Positions 21–47 are disordered; that stretch reads IKKAYRKLAMKHHPDRNQGDTSKVSED. Over residues 24-34 the composition is skewed to basic residues; that stretch reads AYRKLAMKHHP. Residues 35-47 are compositionally biased toward basic and acidic residues; the sequence is DRNQGDTSKVSED. A CR-type zinc finger spans residues 139–217; it reads GKEAQIRIPS…CHGVGKTKNN (79 aa). Zn(2+)-binding residues include C152, C155, C169, C172, C191, C194, C205, and C208. 4 CXXCXGXG motif repeats span residues 152 to 159, 169 to 176, 191 to 198, and 205 to 212; these read CGICHGTG, CTTCHGHG, CPQCKGSG, and CVACHGVG.

Belongs to the DnaJ family. Homodimer. It depends on Zn(2+) as a cofactor.

The protein localises to the cytoplasm. Its function is as follows. Participates actively in the response to hyperosmotic and heat shock by preventing the aggregation of stress-denatured proteins and by disaggregating proteins, also in an autonomous, DnaK-independent fashion. Unfolded proteins bind initially to DnaJ; upon interaction with the DnaJ-bound protein, DnaK hydrolyzes its bound ATP, resulting in the formation of a stable complex. GrpE releases ADP from DnaK; ATP binding to DnaK triggers the release of the substrate protein, thus completing the reaction cycle. Several rounds of ATP-dependent interactions between DnaJ, DnaK and GrpE are required for fully efficient folding. Also involved, together with DnaK and GrpE, in the DNA replication of plasmids through activation of initiation proteins. The chain is Chaperone protein DnaJ from Polaromonas naphthalenivorans (strain CJ2).